Reading from the N-terminus, the 274-residue chain is Bis(5'-nucleosyl)-tetraphosphatase, symmetrical (274 aa).

The protein belongs to the Ap4A hydrolase family.

The catalysed reaction is P(1),P(4)-bis(5'-adenosyl) tetraphosphate + H2O = 2 ADP + 2 H(+). Functionally, hydrolyzes diadenosine 5',5'''-P1,P4-tetraphosphate to yield ADP. The polypeptide is Bis(5'-nucleosyl)-tetraphosphatase, symmetrical (Buchnera aphidicola subsp. Acyrthosiphon pisum (strain Tuc7)).